Here is a 592-residue protein sequence, read N- to C-terminus: Aspartate--tRNA(Asp/Asn) ligase (592 aa).

Glu172 contacts L-aspartate. Residues 196 to 199 (QLFK) are aspartate. L-aspartate is bound at residue Arg218. ATP contacts are provided by residues 218 to 220 (RDE) and Gln227. His442 contributes to the L-aspartate binding site. ATP is bound at residue Glu476. Position 483 (Arg483) interacts with L-aspartate. 528–531 (GWDR) is an ATP binding site. The disordered stretch occupies residues 553–592 (SGTDPLTGAPTPITPEQRKEAGIDADPYAAAGRPPGRQSA).

This sequence belongs to the class-II aminoacyl-tRNA synthetase family. Type 1 subfamily. As to quaternary structure, homodimer.

It localises to the cytoplasm. The enzyme catalyses tRNA(Asx) + L-aspartate + ATP = L-aspartyl-tRNA(Asx) + AMP + diphosphate. Its function is as follows. Aspartyl-tRNA synthetase with relaxed tRNA specificity since it is able to aspartylate not only its cognate tRNA(Asp) but also tRNA(Asn). Reaction proceeds in two steps: L-aspartate is first activated by ATP to form Asp-AMP and then transferred to the acceptor end of tRNA(Asp/Asn). This Acidothermus cellulolyticus (strain ATCC 43068 / DSM 8971 / 11B) protein is Aspartate--tRNA(Asp/Asn) ligase.